Consider the following 181-residue polypeptide: Putative manganese efflux pump MntP (181 aa).

The next 5 membrane-spanning stretches (helical) occupy residues 35–55, 59–79, 102–122, 126–146, and 161–181; these read IIFG…GSIA, VADW…LLMI, AATG…LAFI, ILIT…LGVM, and ILGG…HLTM.

Belongs to the MntP (TC 9.B.29) family.

Its subcellular location is the cell inner membrane. Probably functions as a manganese efflux pump. This is Putative manganese efflux pump MntP from Nitrosomonas eutropha (strain DSM 101675 / C91 / Nm57).